Reading from the N-terminus, the 263-residue chain is MVISARAKIMLLETQNLAIGYEGKTLVQHIQFTLEENQICCLLGANGAGKSTFLKTLLGLQPPIGGDIVWQGKSLSDYSPTELARHIAYVPQAHSHLFPFLVQDMVMMGRSAFLKWYQTPKKSDLDLALMALQELEIAHLAQRYYHQLSGGEKQLVLIARAIAQQAKLLIMDEPTSSLDFGNQIRVLEKIKQLQKQNIALIISTHNPQQAAFLGDNIVLLDQQFGFQQGDKKHLLTLENLAKIYRTSPELLHQHLNNHIEKSL.

Residues 12-247 (LETQNLAIGY…ENLAKIYRTS (236 aa)) form the ABC transporter domain. An ATP-binding site is contributed by 44–51 (GANGAGKS).

Belongs to the ABC transporter superfamily.

This is an uncharacterized protein from Haemophilus influenzae (strain ATCC 51907 / DSM 11121 / KW20 / Rd).